The following is a 479-amino-acid chain: Ribosomal RNA small subunit methyltransferase F (479 aa).

S-adenosyl-L-methionine-binding positions include 125–131 (AAAPGSK), E149, D176, and D194. Residue C247 is the Nucleophile of the active site.

It belongs to the class I-like SAM-binding methyltransferase superfamily. RsmB/NOP family.

The protein localises to the cytoplasm. It catalyses the reaction cytidine(1407) in 16S rRNA + S-adenosyl-L-methionine = 5-methylcytidine(1407) in 16S rRNA + S-adenosyl-L-homocysteine + H(+). Its function is as follows. Specifically methylates the cytosine at position 1407 (m5C1407) of 16S rRNA. The protein is Ribosomal RNA small subunit methyltransferase F of Shigella sonnei (strain Ss046).